The following is a 602-amino-acid chain: DNA ligase (602 aa).

Position 262 (Glu-262) interacts with ATP. Residue Lys-264 is the N6-AMP-lysine intermediate of the active site. Residues Arg-269, Arg-284, Glu-314, Phe-354, Arg-431, and Lys-437 each coordinate ATP.

This sequence belongs to the ATP-dependent DNA ligase family. Monomer. Mg(2+) is required as a cofactor. It depends on Mn(2+) as a cofactor.

It carries out the reaction ATP + (deoxyribonucleotide)n-3'-hydroxyl + 5'-phospho-(deoxyribonucleotide)m = (deoxyribonucleotide)n+m + AMP + diphosphate.. It catalyses the reaction ADP + (deoxyribonucleotide)n-3'-hydroxyl + 5'-phospho-(deoxyribonucleotide)m = (deoxyribonucleotide)n+m + AMP + phosphate.. The enzyme catalyses GTP + (deoxyribonucleotide)n-3'-hydroxyl + 5'-phospho-(deoxyribonucleotide)m = (deoxyribonucleotide)n+m + GMP + diphosphate.. Its activity is regulated as follows. Inhibited in the presence of 100 mM KCl, NaCl or NH(4)Cl. In terms of biological role, DNA ligase that seals nicks in double-stranded DNA during DNA replication, DNA recombination and DNA repair. Can also use ADP, but not NAD(+). This chain is DNA ligase, found in Aeropyrum pernix (strain ATCC 700893 / DSM 11879 / JCM 9820 / NBRC 100138 / K1).